Here is a 205-residue protein sequence, read N- to C-terminus: Small ribosomal subunit protein uS4 (205 aa).

The interval 18 to 49 (NIWGRPKSPVNKREYGPGQHGQRRKGKLSDFG) is disordered. Residues 94-157 (RRLDAIVYRA…KQLALVLEAN (64 aa)) enclose the S4 RNA-binding domain.

This sequence belongs to the universal ribosomal protein uS4 family. Part of the 30S ribosomal subunit. Contacts protein S5. The interaction surface between S4 and S5 is involved in control of translational fidelity.

Its function is as follows. One of the primary rRNA binding proteins, it binds directly to 16S rRNA where it nucleates assembly of the body of the 30S subunit. Functionally, with S5 and S12 plays an important role in translational accuracy. The sequence is that of Small ribosomal subunit protein uS4 from Afipia carboxidovorans (strain ATCC 49405 / DSM 1227 / KCTC 32145 / OM5) (Oligotropha carboxidovorans).